The sequence spans 951 residues: MTVNLSTANEFIARHIGPRQGDEQAMLNSLGFDSLEALSASVIPESIKGTSVLELGHGLSEAQALASIKAIAARNQLFKTYIGQGYYNCHTPSPILRNLLENPAWYTAYTPYQPEISQGRLEALLNFQTLISDLSGLPIANASLLDEGTAAAEAMTFCKRLSKNKGSHAFFASQHCHPQTLDVLRTRAEPLGINVVVGDERKLTDVSPFFGALLQYPASNGDLFDYRELTERFHAANALVAVAADLLALTLLTPPGEFGADVAIGSAQRFGVPLGFGGPHAAYFATRDAFKRDMPGRLVGVSVDRFGKPALRLAMQTREQHIRREKATSNICTAQVLLANIASMYAVYHGPKGLTQIAQRIHQLTAILAKGLVQLGLTVEQESFFDTLSLHTAGRTAALHDKARAQGINLRVIDAERLGLSLDETTTQADVETLWSLLADGKPAPDFAALAAAVTSGIPAALARQSAILSHPVFNRYHSETELMRYLRKLADKDLALDRTMIPLGSCTMKLNAASEMIPITWAEFGALHPFAPAEQSAGYQQLTTELEAMLCAATGYDAVSLQPNAGSQGEYAGLLAIRAYHQSRGDERRDICLIPSSAHGTNPATANMAGMRVVVTACDARGNVDIEDLRAKAIEHREHLAALMITYPSTHGVFEEGIREICGIIHDNGGQVYIDGANMNAMVGLCAPGKFGGDVSHLNLHKTFCIPHGGGGPGVGPIGVKSHLAPFLPGHAALENKKGAVCAAPFGSASILPITWMYISMMGGAGLKRASQLAILNANYISRRLEEHYPVLYTGSNGLVAHECILDLRPLKDSSGISVDDVAKRLIDFGFHAPTMSFPVAGTLMIEPTESESKEELDRFCDAMIRIREEIRAVENGALDKDDNPLKNAPHTAAELVGEWSHPYSREQAVYPVASLVEGKYWPPVGRVDNVFGDRNLVCACPSIESYQDA.

Residue lysine 703 is modified to N6-(pyridoxal phosphate)lysine.

Belongs to the GcvP family. The glycine cleavage system is composed of four proteins: P, T, L and H. Pyridoxal 5'-phosphate serves as cofactor.

It carries out the reaction N(6)-[(R)-lipoyl]-L-lysyl-[glycine-cleavage complex H protein] + glycine + H(+) = N(6)-[(R)-S(8)-aminomethyldihydrolipoyl]-L-lysyl-[glycine-cleavage complex H protein] + CO2. Its function is as follows. The glycine cleavage system catalyzes the degradation of glycine. The P protein binds the alpha-amino group of glycine through its pyridoxal phosphate cofactor; CO(2) is released and the remaining methylamine moiety is then transferred to the lipoamide cofactor of the H protein. This chain is Glycine dehydrogenase (decarboxylating) 1, found in Pseudomonas fluorescens (strain ATCC BAA-477 / NRRL B-23932 / Pf-5).